The following is a 157-amino-acid chain: Large ribosomal subunit protein eL24 (157 aa).

The interval 95–157 is disordered; sequence NQKPEVRKAQ…VSAPRVGGKR (63 aa). Basic and acidic residues predominate over residues 96 to 117; sequence QKPEVRKAQREQAIRAAKEAKK. Residues 123 to 145 show a composition bias toward low complexity; sequence KKQTTQSSKAPAKSAQKQKIAKP.

This sequence belongs to the eukaryotic ribosomal protein eL24 family. In terms of assembly, component of the large ribosomal subunit.

The protein localises to the cytoplasm. Component of the large ribosomal subunit. The ribosome is a large ribonucleoprotein complex responsible for the synthesis of proteins in the cell. Plays an essential role in early embryonic development. The sequence is that of Large ribosomal subunit protein eL24 (rpl24) from Danio rerio (Zebrafish).